The sequence spans 484 residues: Threonine synthase-like 2 (484 aa).

Lys113 carries the post-translational modification N6-(pyridoxal phosphate)lysine.

The protein belongs to the threonine synthase family. The cofactor is pyridoxal 5'-phosphate.

Its subcellular location is the secreted. Acts as a catabolic phospho-lyase on both gamma- and beta-phosphorylated substrates. Degrades O-phospho-threonine (PThr) to alpha-ketobutyrate, ammonia and phosphate. Functionally, potent inducer of osteoblastic production of IL6. May act to exacerbate inflammation and/or bone turnover under inflammatory conditions. This is Threonine synthase-like 2 (THNSL2) from Homo sapiens (Human).